The sequence spans 259 residues: Type III pantothenate kinase (259 aa).

An ATP-binding site is contributed by 9–16; sequence DAGNSRIK. Residues Tyr-93 and 100–103 contribute to the substrate site; that span reads GSDR. Asp-102 functions as the Proton acceptor in the catalytic mechanism. Thr-126 serves as a coordination point for ATP. Thr-190 contacts substrate.

Belongs to the type III pantothenate kinase family. Homodimer. NH4(+) serves as cofactor. Requires K(+) as cofactor.

Its subcellular location is the cytoplasm. The catalysed reaction is (R)-pantothenate + ATP = (R)-4'-phosphopantothenate + ADP + H(+). It functions in the pathway cofactor biosynthesis; coenzyme A biosynthesis; CoA from (R)-pantothenate: step 1/5. Functionally, catalyzes the phosphorylation of pantothenate (Pan), the first step in CoA biosynthesis. This Burkholderia pseudomallei (strain K96243) protein is Type III pantothenate kinase.